The chain runs to 88 residues: UPF0298 protein BcerKBAB4_3759 (88 aa).

It belongs to the UPF0298 family.

Its subcellular location is the cytoplasm. The protein is UPF0298 protein BcerKBAB4_3759 of Bacillus mycoides (strain KBAB4) (Bacillus weihenstephanensis).